A 105-amino-acid chain; its full sequence is Circadian clock oscillator protein KaiB (105 aa).

This sequence belongs to the KaiB family. May undergo a major conformational rearrangment; in the free state forms homooligomers. When bound to KaiC switches to a monomeric thioredoxin-fold (KaiB(fs)). The active oscillator complex is probably KaiC(6):KaiB(6).

Component of the KaiBC clock protein complex, which constitutes the main circadian regulator in cyanobacteria; it may modify the ATPase activity of KaiC. Its function is as follows. May be a metamorphic protein which reversibly switches between an inactive tetrameric fold and a rare, thioredoxin-like monomeric fold (KaiB(fs)). KaiB(fs) binds phospho-KaiC, and perhaps clock output effectors. The protein is Circadian clock oscillator protein KaiB of Prochlorococcus marinus (strain MIT 9312).